A 298-amino-acid chain; its full sequence is Specificity protein transcription factor 1 (298 aa).

A compositionally biased stretch (low complexity) spans 206 to 218; sequence VSSGSESVSARGT. Residues 206-233 form a disordered region; the sequence is VSSGSESVSARGTSGSGGTGKYPSSRTA. The C2H2-type zinc-finger motif lies at 260–284; sequence HNCHIAGCGKVYNKSSHLKAHLRWH.

The protein belongs to the Sp1 C2H2-type zinc-finger protein family. In terms of tissue distribution, expressed in ASJ sensory neurons, pharyngeal cells, rectal cells, intestine, seam cells, and vulval cells.

Probable transcription factor which modulates gene expression, thereby acting as an ASJ sensory neuron terminal selector gene. The sequence is that of Specificity protein transcription factor 1 from Caenorhabditis elegans.